The following is a 438-amino-acid chain: 3-phosphoshikimate 1-carboxyvinyltransferase (438 aa).

3 residues coordinate 3-phosphoshikimate: Lys-28, Ser-29, and Arg-33. Residue Lys-28 participates in phosphoenolpyruvate binding. Gly-97 and Arg-125 together coordinate phosphoenolpyruvate. 3-phosphoshikimate is bound by residues Ser-168, Ser-169, Gln-170, Glu-316, and His-343. Gln-170 lines the phosphoenolpyruvate pocket. Glu-316 functions as the Proton acceptor in the catalytic mechanism. Phosphoenolpyruvate is bound by residues Arg-347, Arg-388, and Lys-413.

This sequence belongs to the EPSP synthase family. As to quaternary structure, monomer.

It is found in the cytoplasm. The enzyme catalyses 3-phosphoshikimate + phosphoenolpyruvate = 5-O-(1-carboxyvinyl)-3-phosphoshikimate + phosphate. It participates in metabolic intermediate biosynthesis; chorismate biosynthesis; chorismate from D-erythrose 4-phosphate and phosphoenolpyruvate: step 6/7. In terms of biological role, catalyzes the transfer of the enolpyruvyl moiety of phosphoenolpyruvate (PEP) to the 5-hydroxyl of shikimate-3-phosphate (S3P) to produce enolpyruvyl shikimate-3-phosphate and inorganic phosphate. This Rhodococcus jostii (strain RHA1) protein is 3-phosphoshikimate 1-carboxyvinyltransferase.